The sequence spans 139 residues: Small ribosomal subunit protein bS6 (139 aa).

This sequence belongs to the bacterial ribosomal protein bS6 family.

In terms of biological role, binds together with bS18 to 16S ribosomal RNA. The polypeptide is Small ribosomal subunit protein bS6 (Borreliella afzelii (strain PKo) (Borrelia afzelii)).